The chain runs to 341 residues: N-acetyl-gamma-glutamyl-phosphate reductase (341 aa).

C149 is an active-site residue.

It belongs to the NAGSA dehydrogenase family. Type 1 subfamily.

It localises to the cytoplasm. It catalyses the reaction N-acetyl-L-glutamate 5-semialdehyde + phosphate + NADP(+) = N-acetyl-L-glutamyl 5-phosphate + NADPH + H(+). The protein operates within amino-acid biosynthesis; L-arginine biosynthesis; N(2)-acetyl-L-ornithine from L-glutamate: step 3/4. Its function is as follows. Catalyzes the NADPH-dependent reduction of N-acetyl-5-glutamyl phosphate to yield N-acetyl-L-glutamate 5-semialdehyde. This Methanocaldococcus jannaschii (strain ATCC 43067 / DSM 2661 / JAL-1 / JCM 10045 / NBRC 100440) (Methanococcus jannaschii) protein is N-acetyl-gamma-glutamyl-phosphate reductase.